The following is a 119-amino-acid chain: Large ribosomal subunit protein bL20 (119 aa).

This sequence belongs to the bacterial ribosomal protein bL20 family.

In terms of biological role, binds directly to 23S ribosomal RNA and is necessary for the in vitro assembly process of the 50S ribosomal subunit. It is not involved in the protein synthesizing functions of that subunit. This chain is Large ribosomal subunit protein bL20, found in Xylella fastidiosa (strain 9a5c).